The following is a 370-amino-acid chain: Anhydro-N-acetylmuramic acid kinase (370 aa).

Position 12-19 (12-19 (GTSLDGVD)) interacts with ATP.

Belongs to the anhydro-N-acetylmuramic acid kinase family.

It catalyses the reaction 1,6-anhydro-N-acetyl-beta-muramate + ATP + H2O = N-acetyl-D-muramate 6-phosphate + ADP + H(+). It participates in amino-sugar metabolism; 1,6-anhydro-N-acetylmuramate degradation. The protein operates within cell wall biogenesis; peptidoglycan recycling. In terms of biological role, catalyzes the specific phosphorylation of 1,6-anhydro-N-acetylmuramic acid (anhMurNAc) with the simultaneous cleavage of the 1,6-anhydro ring, generating MurNAc-6-P. Is required for the utilization of anhMurNAc either imported from the medium or derived from its own cell wall murein, and thus plays a role in cell wall recycling. This is Anhydro-N-acetylmuramic acid kinase from Proteus mirabilis (strain HI4320).